The following is a 964-amino-acid chain: Collagen alpha-1(I) chain (964 aa).

The segment at 1–964 is disordered; the sequence is GGISVPGPMG…PGPPGPPGPP (964 aa). 11 positions are modified to 4-hydroxyproline: Pro18, Pro21, Pro24, Pro33, Pro36, Pro39, Pro53, Pro68, Pro74, Pro83, and Pro89. Positions 56 to 70 are enriched in basic and acidic residues; sequence NGDDGEAGKPGRPGE. Position 92 is a 5-hydroxylysine; alternate (Lys92). An O-linked (Gal...) hydroxylysine; alternate glycan is attached at Lys92. Ser98 is subject to Phosphoserine. Low complexity-rich tracts occupy residues 106-117 and 126-144; these read DAGPAGPKQMGP and PGAS…TGAA. 4-hydroxyproline is present on residues Pro126, Pro147, Pro156, Pro159, Pro186, Pro189, Pro201, Pro207, Pro216, Pro222, Pro225, and Pro240. Residues 146–158 are compositionally biased toward pro residues; the sequence is PPGPTGPAGPPGF. Residues 192-231 are compositionally biased toward low complexity; sequence AGAAGPAGNPGADGQPGAKGANGAPGIAGAPGFPGARGPS. Lys243 is modified (5-hydroxylysine). 4-hydroxyproline is present on residues Pro249, Pro252, Pro260, Pro269, Pro284, Pro290, Pro299, and Pro305. Residues 294–303 show a composition bias toward gly residues; sequence GERGGPGSRG. 5-hydroxylysine is present on Lys314. Pro323, Pro332, Pro338, Pro344, Pro353, Pro356, Pro365, Pro374, Pro379, Pro391, Pro400, Pro409, Pro412, Pro430, Pro447, Pro453, Pro459, Pro465, Pro471, Pro477, Pro489, Pro498, Pro510, and Pro519 each carry 4-hydroxyproline. Low complexity predominate over residues 347-373; that stretch reads KGLTGSPGSPGPDGKTGPPGPAGQDGR. Positions 381–400 are enriched in low complexity; sequence ARGQAGVMGFPGPKGAAGEP. The segment covering 459-468 has biased composition (low complexity); it reads PGEAGKPGEQ. Lys531 is subject to 5-hydroxylysine. 4-hydroxyproline occurs at positions 537, 552, and 558. Residues 564–578 show a composition bias toward low complexity; the sequence is SGPSGPAGPTGARGA. Ser567 carries the post-translational modification Phosphoserine. A 4-hydroxyproline mark is found at Pro579, Pro585, Pro588, Pro597, Pro603, Pro621, Pro630, and Pro639. Residues 591–618 are compositionally biased toward low complexity; the sequence is AGFAGPPGADGQPGAKGEPGDAGAKGDA. The span at 620 to 632 shows a compositional bias: pro residues; sequence PPGPAGPTGPPGP. 5-hydroxylysine is present on Lys642. Positions 647–663 are enriched in low complexity; the sequence is SAGPPGATGFPGAAGRV. A 4-hydroxyproline mark is found at Pro651 and Pro657. Position 665 is a 3-hydroxyproline (Pro665). 15 positions are modified to 4-hydroxyproline: Pro666, Pro675, Pro678, Pro704, Pro712, Pro721, Pro739, Pro748, Pro751, Pro757, Pro772, Pro778, Pro784, Pro792, and Pro798. The span at 709–721 shows a compositional bias: low complexity; that stretch reads KGSPGADGPAGAP. A compositionally biased stretch (pro residues) spans 771-781; sequence PPGPMGPPGLA. At Lys807 the chain carries 5-hydroxylysine. The segment covering 815–830 has biased composition (pro residues); it reads PGPPGAPGAPGAPGPV. 3 positions are modified to 4-hydroxyproline: Pro818, Pro821, and Pro824. The span at 850–864 shows a compositional bias: low complexity; sequence AGPAGARGPAGPQGP. Basic and acidic residues predominate over residues 865–879; that stretch reads RGDKGETGEQGDRGI. Lys868 carries the 5-hydroxylysine modification. The residue at position 880 (Lys880) is a 5-hydroxylysine; alternate. O-linked (Gal...) hydroxylysine; alternate glycosylation occurs at Lys880. Residues Pro895, Pro898, Pro916, and Pro931 each carry the 4-hydroxyproline modification. Positions 898 to 931 are enriched in low complexity; that stretch reads PGEQGPSGASGPAGPRGPPGSAGSPGKDGLNGLP. Pro936 is modified (3-hydroxyproline). The residue at position 937 (Pro937) is a 4-hydroxyproline. Over residues 949-964 the composition is skewed to pro residues; it reads VGPPGPPGPPGPPGPP. Pro951 carries the post-translational modification 3-hydroxyproline. Residue Pro952 is modified to 4-hydroxyproline. At Pro954 the chain carries 3-hydroxyproline. Pro955 bears the 4-hydroxyproline mark. Pro957 carries the 3-hydroxyproline modification. Residues Pro958, Pro961, and Pro964 each carry the 4-hydroxyproline modification.

It belongs to the fibrillar collagen family. Trimers of one alpha 2(I) and two alpha 1(I) chains. Post-translationally, contains mostly 4-hydroxyproline. Proline residues at the third position of the tripeptide repeating unit (G-X-Y) are hydroxylated in some or all of the chains. Contains 3-hydroxyproline at a few sites. This modification occurs on the first proline residue in the sequence motif Gly-Pro-Hyp, where Hyp is 4-hydroxyproline. In terms of processing, lysine residues at the third position of the tripeptide repeating unit (G-X-Y) are 5-hydroxylated in some or all of the chains. Post-translationally, O-glycosylated on hydroxylated lysine residues. The O-linked glycan consists of a Glc-Gal disaccharide. Expressed in bones.

It is found in the secreted. Its subcellular location is the extracellular space. The protein resides in the extracellular matrix. Functionally, type I collagen is a member of group I collagen (fibrillar forming collagen). The protein is Collagen alpha-1(I) chain of Parocnus serus (Greater Haitian ground sloth).